We begin with the raw amino-acid sequence, 623 residues long: Hemagglutinin component HA-70 type D (623 aa).

In terms of assembly, botulinum toxins are produced as large progenitor toxins of 12S (M toxin, about 280 kDa) and 16S (L toxin, about 650 kDa). M toxin consists of a non-toxic, non-hemagglutinin component (NTNHA) and the neurotoxin (BoNT/D). L toxin consists of the M toxin and the 3 hemagglutinin (HA) subcomponents of 70, 33, and 17 kDa. The stoichiometry of the whole complex has been modeled as one BoNT/D, one NTNHA, three HA-70, six HA-33 and three HA-17. HA-33 and HA-17 crystallize as a heterotrimer with two HA-33 and one HA-17. Limited treatment of L toxin with pepsin or trypsin produces shorter HA-70 proteins (called HA-55, HA-23 and HA-22) sometimes observed in vivo in other strains of type C and D botulinum toxin preparations.

The protein resides in the secreted. The hemagglutinin (HA) component of the progenitor toxin protects the structural integrity of the neurotoxin; may increase internalization of the neurotoxin into the bloodstream of the host. Involved in binding to the small intestine through interactions with glycolipids and glycoproteins containing sialic acid moieties. Erythrocyte agglutination only occurs when the entire complex is assembled. This HA subunit probably connects toxin/NTNHA to HA-33 and HA-17, the other components of the HA complex, and it may also protect the M toxin from proteolysis upon secretion. The sequence is that of Hemagglutinin component HA-70 type D from Clostridium botulinum D phage (Clostridium botulinum D bacteriophage).